The chain runs to 636 residues: 1-deoxy-D-xylulose-5-phosphate synthase (636 aa).

Residues His84 and 125 to 127 (GHS) contribute to the thiamine diphosphate site. Asp156 serves as a coordination point for Mg(2+). Thiamine diphosphate contacts are provided by residues 157–158 (GA), Asn185, Phe292, and Glu375. Asn185 contributes to the Mg(2+) binding site.

Belongs to the transketolase family. DXPS subfamily. As to quaternary structure, homodimer. It depends on Mg(2+) as a cofactor. Thiamine diphosphate is required as a cofactor.

The enzyme catalyses D-glyceraldehyde 3-phosphate + pyruvate + H(+) = 1-deoxy-D-xylulose 5-phosphate + CO2. Its pathway is metabolic intermediate biosynthesis; 1-deoxy-D-xylulose 5-phosphate biosynthesis; 1-deoxy-D-xylulose 5-phosphate from D-glyceraldehyde 3-phosphate and pyruvate: step 1/1. Catalyzes the acyloin condensation reaction between C atoms 2 and 3 of pyruvate and glyceraldehyde 3-phosphate to yield 1-deoxy-D-xylulose-5-phosphate (DXP). This Cellvibrio japonicus (strain Ueda107) (Pseudomonas fluorescens subsp. cellulosa) protein is 1-deoxy-D-xylulose-5-phosphate synthase.